Reading from the N-terminus, the 196-residue chain is DPQKEELIEHSLNKQTGSNFGQKTELEKVWVDTSSEDISNSYFEIKPLNLSGSREKSLFKTLKEDRLDAKSAQENLNILKEIQQQIIKNVSQKKQAPLNELYLKDLENISNQLGNSEPIKLSEIEKKQEPIERKTSTTTNTESNQEKPLRLGNKTIQLKDGTILKGNAMQYGSQYILEENEKKRIIESTNIESISF.

Positions 122 to 135 are enriched in basic and acidic residues; that stretch reads SEIEKKQEPIERKT. The tract at residues 122 to 150 is disordered; it reads SEIEKKQEPIERKTSTTTNTESNQEKPLR.

This is an uncharacterized protein from Leptospira interrogans.